The chain runs to 1333 residues: DNA-directed RNA polymerase subunit beta' (1333 aa).

Residues Cys60, Cys62, Cys75, and Cys78 each coordinate Zn(2+). Positions 535, 537, and 539 each coordinate Mg(2+). Zn(2+) contacts are provided by Cys901, Cys983, Cys990, and Cys993.

Belongs to the RNA polymerase beta' chain family. In terms of assembly, the RNAP catalytic core consists of 2 alpha, 1 beta, 1 beta' and 1 omega subunit. When a sigma factor is associated with the core the holoenzyme is formed, which can initiate transcription. The cofactor is Mg(2+). Zn(2+) serves as cofactor.

The catalysed reaction is RNA(n) + a ribonucleoside 5'-triphosphate = RNA(n+1) + diphosphate. DNA-dependent RNA polymerase catalyzes the transcription of DNA into RNA using the four ribonucleoside triphosphates as substrates. This chain is DNA-directed RNA polymerase subunit beta', found in Corynebacterium glutamicum (strain ATCC 13032 / DSM 20300 / JCM 1318 / BCRC 11384 / CCUG 27702 / LMG 3730 / NBRC 12168 / NCIMB 10025 / NRRL B-2784 / 534).